The following is a 142-amino-acid chain: Large ribosomal subunit protein uL11 (142 aa).

It belongs to the universal ribosomal protein uL11 family. Part of the ribosomal stalk of the 50S ribosomal subunit. Interacts with L10 and the large rRNA to form the base of the stalk. L10 forms an elongated spine to which L12 dimers bind in a sequential fashion forming a multimeric L10(L12)X complex. Post-translationally, one or more lysine residues are methylated.

Forms part of the ribosomal stalk which helps the ribosome interact with GTP-bound translation factors. In Xanthomonas axonopodis pv. citri (strain 306), this protein is Large ribosomal subunit protein uL11.